The sequence spans 251 residues: Flap endonuclease Xni (251 aa).

D104 lines the Mg(2+) pocket. The region spanning 160–249 (VQPQQLPDYW…IDGNLQQLRL (90 aa)) is the 5'-3' exonuclease domain. Residues L171, A172, P180, V182, and I185 each coordinate K(+). An interaction with DNA region spans residues 184-189 (GIGPKS).

The protein belongs to the Xni family. It depends on Mg(2+) as a cofactor. K(+) is required as a cofactor.

Functionally, has flap endonuclease activity. During DNA replication, flap endonucleases cleave the 5'-overhanging flap structure that is generated by displacement synthesis when DNA polymerase encounters the 5'-end of a downstream Okazaki fragment. This chain is Flap endonuclease Xni, found in Escherichia coli O17:K52:H18 (strain UMN026 / ExPEC).